A 506-amino-acid chain; its full sequence is D-alanine--D-alanyl carrier protein ligase (506 aa).

Position 152–153 (152–153 (TS)) interacts with ATP. Asp-197 is a D-alanine binding site. 292-297 (NTYGPT) contacts ATP. Residue Val-301 participates in D-alanine binding. Residues Asp-383, 395-398 (YRGR), and Lys-494 contribute to the ATP site. Position 494 (Lys-494) interacts with D-alanine.

Belongs to the ATP-dependent AMP-binding enzyme family. DltA subfamily.

Its subcellular location is the cytoplasm. The enzyme catalyses holo-[D-alanyl-carrier protein] + D-alanine + ATP = D-alanyl-[D-alanyl-carrier protein] + AMP + diphosphate. It participates in cell wall biogenesis; lipoteichoic acid biosynthesis. Its function is as follows. Catalyzes the first step in the D-alanylation of lipoteichoic acid (LTA), the activation of D-alanine and its transfer onto the D-alanyl carrier protein (Dcp) DltC. In an ATP-dependent two-step reaction, forms a high energy D-alanyl-AMP intermediate, followed by transfer of the D-alanyl residue as a thiol ester to the phosphopantheinyl prosthetic group of the Dcp. D-alanylation of LTA plays an important role in modulating the properties of the cell wall in Gram-positive bacteria, influencing the net charge of the cell wall. The chain is D-alanine--D-alanyl carrier protein ligase from Lacticaseibacillus paracasei (strain ATCC 334 / BCRC 17002 / CCUG 31169 / CIP 107868 / KCTC 3260 / NRRL B-441) (Lactobacillus paracasei).